A 251-amino-acid chain; its full sequence is Guanine nucleotide-binding protein subunit gamma 3 (251 aa).

The span at 1–10 shows a compositional bias: gly residues; that stretch reads MSAPSGGGEG. The segment at 1–44 is disordered; that stretch reads MSAPSGGGEGGGKESAAGGVSSSSLAPSSLPPPRPKSPPEYPDL. A compositionally biased stretch (low complexity) spans 14–28; that stretch reads ESAAGGVSSSSLAPS. A compositionally biased stretch (pro residues) spans 29–41; the sequence is SLPPPRPKSPPEY. Positions 46–126 constitute a G protein gamma domain; that stretch reads GKRREAARVQ…LSLVSFCCCC (81 aa). A Cysteine methyl ester modification is found at Cys-248. Residue Cys-248 is the site of S-farnesyl cysteine attachment. Positions 249–251 are cleaved as a propeptide — removed in mature form; the sequence is LAF.

G proteins are composed of 3 units, alpha, beta and gamma. In terms of tissue distribution, expressed in flowers and siliques.

Functionally, guanine nucleotide-binding proteins (G proteins) are involved as a modulator or transducer in various transmembrane signaling systems. The beta and gamma chains are required for the GTPase activity, for replacement of GDP by GTP, and for G protein-effector interaction. This is Guanine nucleotide-binding protein subunit gamma 3 (GG3) from Arabidopsis thaliana (Mouse-ear cress).